We begin with the raw amino-acid sequence, 410 residues long: Histidine--tRNA ligase (410 aa).

It belongs to the class-II aminoacyl-tRNA synthetase family. As to quaternary structure, homodimer.

It is found in the cytoplasm. It carries out the reaction tRNA(His) + L-histidine + ATP = L-histidyl-tRNA(His) + AMP + diphosphate + H(+). In Elusimicrobium minutum (strain Pei191), this protein is Histidine--tRNA ligase.